The following is a 268-amino-acid chain: 4-diphosphocytidyl-2-C-methyl-D-erythritol kinase (268 aa).

Lys-9 is a catalytic residue. An ATP-binding site is contributed by Pro-88–Ser-98. The active site involves Asp-130.

It belongs to the GHMP kinase family. IspE subfamily.

The catalysed reaction is 4-CDP-2-C-methyl-D-erythritol + ATP = 4-CDP-2-C-methyl-D-erythritol 2-phosphate + ADP + H(+). Its pathway is isoprenoid biosynthesis; isopentenyl diphosphate biosynthesis via DXP pathway; isopentenyl diphosphate from 1-deoxy-D-xylulose 5-phosphate: step 3/6. Catalyzes the phosphorylation of the position 2 hydroxy group of 4-diphosphocytidyl-2C-methyl-D-erythritol. The protein is 4-diphosphocytidyl-2-C-methyl-D-erythritol kinase of Aquifex aeolicus (strain VF5).